The chain runs to 667 residues: Serine/threonine-protein kinase BUR1 (667 aa).

The Protein kinase domain maps to 60–378; sequence YKEEEKLGQG…AMSAMKHPFF (319 aa). ATP is bound by residues 66–74 and Lys89; that span reads LGQGTFGEV. Asp207 functions as the Proton acceptor in the catalytic mechanism. Residues 408–667 are disordered; it reads HEAMSQKGPS…SEQKDIADLY (260 aa). Residues 432–443 are compositionally biased toward basic and acidic residues; sequence KFEKKSGIKREQ. Positions 494–516 are enriched in polar residues; sequence NNHSGSLRNRITPSNMGTHSNPR. The span at 541–556 shows a compositional bias: low complexity; the sequence is YNRGYSSSVNSRYNNR. Polar residues-rich tracts occupy residues 582–594, 602–611, and 622–632; these read DNNQ…QGHS, SKYNSTQTNI, and NEYNASKLGSQ. Over residues 633-667 the composition is skewed to basic and acidic residues; that stretch reads DTKKNDYPKHSETQKQQNNEEKKIHSEQKDIADLY.

It belongs to the protein kinase superfamily. CMGC Ser/Thr protein kinase family. CDC2/CDKX subfamily.

It is found in the nucleus. The enzyme catalyses L-seryl-[protein] + ATP = O-phospho-L-seryl-[protein] + ADP + H(+). It catalyses the reaction L-threonyl-[protein] + ATP = O-phospho-L-threonyl-[protein] + ADP + H(+). It carries out the reaction [DNA-directed RNA polymerase] + ATP = phospho-[DNA-directed RNA polymerase] + ADP + H(+). Serine/threonine-protein kinase involved in transcription regulation. Phosphorylates the UBC2/RAD6 ubiquitin-conjugating enzyme (E2), leading to monoubiquitination of histone H2B and the silencing of telomeric-associated genes. Also required for histone H3 methylation. Necessary for the recovery from pheromone-induced growth arrest in the cell cycle G1 phase. This chain is Serine/threonine-protein kinase BUR1 (BUR1), found in Candida glabrata (strain ATCC 2001 / BCRC 20586 / JCM 3761 / NBRC 0622 / NRRL Y-65 / CBS 138) (Yeast).